The primary structure comprises 124 residues: Small ribosomal subunit protein uS12cy (124 aa).

Belongs to the universal ribosomal protein uS12 family. As to quaternary structure, part of the 30S ribosomal subunit.

The protein resides in the plastid. It localises to the chloroplast. Its function is as follows. With S4 and S5 plays an important role in translational accuracy. Located at the interface of the 30S and 50S subunits. This Olimarabidopsis pumila (Dwarf rocket) protein is Small ribosomal subunit protein uS12cy (rps12-B).